Reading from the N-terminus, the 172-residue chain is Ribosome maturation factor RimM (172 aa).

A PRC barrel domain is found at 96-168 (EGEFYYHQII…RVDVELMEGL (73 aa)).

This sequence belongs to the RimM family. Binds ribosomal protein uS19.

The protein resides in the cytoplasm. Functionally, an accessory protein needed during the final step in the assembly of 30S ribosomal subunit, possibly for assembly of the head region. Essential for efficient processing of 16S rRNA. May be needed both before and after RbfA during the maturation of 16S rRNA. It has affinity for free ribosomal 30S subunits but not for 70S ribosomes. The chain is Ribosome maturation factor RimM from Streptococcus pyogenes serotype M18 (strain MGAS8232).